A 905-amino-acid chain; its full sequence is Translation initiation factor IF-2 (905 aa).

3 disordered regions span residues 52-84, 116-230, and 269-318; these read QSHG…SKSV, AKKR…QKKT, and FEKE…FEKP. Residues 65-84 are compositionally biased toward polar residues; sequence KSKTTSTARVTGSSGKSKSV. The segment covering 116 to 138 has biased composition (basic and acidic residues); sequence AKKRAEEEAKKREQVKKEAEERQ. The span at 165 to 178 shows a compositional bias: low complexity; it reads VVVKKGSKAAAAAK. Composition is skewed to basic and acidic residues over residues 190-230 and 269-278; these read PKVE…QKKT and FEKERREIKR. Positions 406–575 constitute a tr-type G domain; that stretch reads TRPPVVTIMG…NLQAELMELE (170 aa). The G1 stretch occupies residues 415-422; it reads GHVDHGKT. Position 415–422 (415–422) interacts with GTP; sequence GHVDHGKT. The G2 stretch occupies residues 440-444; that stretch reads GITQH. The tract at residues 461-464 is G3; it reads DTPG. Residues 461–465 and 515–518 each bind GTP; these read DTPGH and NKMD. A G4 region spans residues 515–518; sequence NKMD. Residues 551–553 are G5; it reads SAK.

Belongs to the TRAFAC class translation factor GTPase superfamily. Classic translation factor GTPase family. IF-2 subfamily.

It localises to the cytoplasm. Functionally, one of the essential components for the initiation of protein synthesis. Protects formylmethionyl-tRNA from spontaneous hydrolysis and promotes its binding to the 30S ribosomal subunits. Also involved in the hydrolysis of GTP during the formation of the 70S ribosomal complex. The polypeptide is Translation initiation factor IF-2 (Psychrobacter sp. (strain PRwf-1)).